Here is a 430-residue protein sequence, read N- to C-terminus: 3-phosphoshikimate 1-carboxyvinyltransferase (430 aa).

Residues lysine 20, serine 21, and arginine 25 each contribute to the 3-phosphoshikimate site. Lysine 20 is a binding site for phosphoenolpyruvate. Positions 90 and 118 each coordinate phosphoenolpyruvate. Residues serine 163, serine 164, glutamine 165, serine 191, aspartate 311, and lysine 338 each contribute to the 3-phosphoshikimate site. Residue glutamine 165 participates in phosphoenolpyruvate binding. Residue aspartate 311 is the Proton acceptor of the active site. Phosphoenolpyruvate-binding residues include arginine 342 and arginine 383.

Belongs to the EPSP synthase family. In terms of assembly, monomer.

It localises to the cytoplasm. The enzyme catalyses 3-phosphoshikimate + phosphoenolpyruvate = 5-O-(1-carboxyvinyl)-3-phosphoshikimate + phosphate. It functions in the pathway metabolic intermediate biosynthesis; chorismate biosynthesis. In terms of biological role, catalyzes the transfer of the enolpyruvyl moiety of phosphoenolpyruvate (PEP) to the 5-hydroxyl of shikimate-3-phosphate (S3P) to produce enolpyruvyl shikimate-3-phosphate and inorganic phosphate. The protein is 3-phosphoshikimate 1-carboxyvinyltransferase of Methanosarcina acetivorans (strain ATCC 35395 / DSM 2834 / JCM 12185 / C2A).